We begin with the raw amino-acid sequence, 616 residues long: Dihydroxy-acid dehydratase (616 aa).

Asp81 lines the Mg(2+) pocket. Residue Cys122 participates in [2Fe-2S] cluster binding. Mg(2+)-binding residues include Asp123 and Lys124. N6-carboxylysine is present on Lys124. Position 195 (Cys195) interacts with [2Fe-2S] cluster. Glu491 is a binding site for Mg(2+). The active-site Proton acceptor is the Ser517.

Belongs to the IlvD/Edd family. As to quaternary structure, homodimer. The cofactor is [2Fe-2S] cluster. Requires Mg(2+) as cofactor.

The enzyme catalyses (2R)-2,3-dihydroxy-3-methylbutanoate = 3-methyl-2-oxobutanoate + H2O. It catalyses the reaction (2R,3R)-2,3-dihydroxy-3-methylpentanoate = (S)-3-methyl-2-oxopentanoate + H2O. Its pathway is amino-acid biosynthesis; L-isoleucine biosynthesis; L-isoleucine from 2-oxobutanoate: step 3/4. It participates in amino-acid biosynthesis; L-valine biosynthesis; L-valine from pyruvate: step 3/4. In terms of biological role, functions in the biosynthesis of branched-chain amino acids. Catalyzes the dehydration of (2R,3R)-2,3-dihydroxy-3-methylpentanoate (2,3-dihydroxy-3-methylvalerate) into 2-oxo-3-methylpentanoate (2-oxo-3-methylvalerate) and of (2R)-2,3-dihydroxy-3-methylbutanoate (2,3-dihydroxyisovalerate) into 2-oxo-3-methylbutanoate (2-oxoisovalerate), the penultimate precursor to L-isoleucine and L-valine, respectively. This is Dihydroxy-acid dehydratase from Sodalis glossinidius (strain morsitans).